A 566-amino-acid polypeptide reads, in one-letter code: Putative ABC transporter ATP-binding protein BA_2641/GBAA_2641/BAS2461 (566 aa).

ABC transporter domains lie at 5 to 246 and 300 to 533; these read ISFE…GLRE and LKVE…ANLK. ATP-binding positions include 39–46 and 333–340; these read GRSGSGKS and GHNGAGKS.

This sequence belongs to the ABC transporter superfamily.

It localises to the cell membrane. In terms of biological role, probably part of an ABC transporter complex. Responsible for energy coupling to the transport system. This chain is Putative ABC transporter ATP-binding protein BA_2641/GBAA_2641/BAS2461, found in Bacillus anthracis.